The sequence spans 212 residues: Transmembrane emp24 domain-containing protein p24delta4 (212 aa).

The first 25 residues, 1 to 25 (MKKKMIPTTILLSALIFSLSPICEA), serve as a signal peptide directing secretion. Over 26–179 (VWLTVPHTGS…RIVSEKTNSR (154 aa)) the chain is Lumenal. A GOLD domain is found at 35 to 147 (SKCVSEEIQS…IEGVELEFKK (113 aa)). Asn82 is a glycosylation site (N-linked (GlcNAc...) asparagine). Residues 133–155 (ARKEKIEGVELEFKKLEGAVEAI) are a coiled coil. Residues Arg165 and Arg170 each carry the omega-N-methylated arginine modification. The chain crosses the membrane as a helical span at residues 180-200 (VAWYSIMSLGICIVVSGLQIL). Topologically, residues 201–212 (YLKQYFEKKKLI) are cytoplasmic. Residues 205 to 206 (YF) carry the COPII vesicle coat-binding motif. The COPI vesicle coat-binding motif lies at 205 to 212 (YFEKKKLI).

This sequence belongs to the EMP24/GP25L family. As to quaternary structure, probably oligomerizes with other members of the EMP24/GP25L family. Associates with the COPI vesicle coat (coatomer). Associates with the COPII vesicle coat (coatomer).

It localises to the endoplasmic reticulum membrane. It is found in the golgi apparatus membrane. Involved in vesicular protein trafficking. Mainly functions in the early secretory pathway. Required for trafficking GLL23, a component of the PYK10 complex. May act as a receptor facilitating its packing into COPII carriers and export from the endoplasmic reticulum. The polypeptide is Transmembrane emp24 domain-containing protein p24delta4 (CYB) (Arabidopsis thaliana (Mouse-ear cress)).